The sequence spans 150 residues: MRKKKKSLTEVSALGQYIPMSVHKARRVIDQIRGRSYKETLMILELMPYRACYPIFKIIYSAAANAKHNKGFEKEDLLVWKAEVNKGPTRKKLKPRARGRSYLIKKPTCHISVVLKDISYYEAYETLYNREKYLPSNFRLKSSGAIWDKK.

Belongs to the universal ribosomal protein uL22 family. In terms of assembly, part of the 50S ribosomal subunit.

It is found in the plastid. The protein resides in the chloroplast. In terms of biological role, this protein binds specifically to 23S rRNA. Functionally, the globular domain of the protein is located near the polypeptide exit tunnel on the outside of the subunit, while an extended beta-hairpin is found that lines the wall of the exit tunnel in the center of the 70S ribosome. This chain is Large ribosomal subunit protein uL22c (rpl22), found in Fagopyrum esculentum subsp. ancestrale (Wild buckwheat).